The following is a 338-amino-acid chain: POU domain, class 4, transcription factor 3 (338 aa).

The short motif at 56 to 65 is the POU-IV box element; that stretch reads RAEALAAVDI. The POU-specific domain occupies 179–256; sequence DVESDPRELE…VLQAWLEEAE (78 aa). Positions 274-333 form a DNA-binding region, homeobox; it reads RKRKRTSIAAPEKRSLEAYFAIQPRPSSEKIAAIAEKLDLKKNVVRVWFCNQRQKQKRMK.

It belongs to the POU transcription factor family. Class-4 subfamily. In terms of assembly, interacts with ISL1. Brain. Seems to be specific to the retina.

Its subcellular location is the nucleus. The protein localises to the cytoplasm. Functionally, acts as a transcriptional activator. Acts by binding to sequences related to the consensus octamer motif 5'-ATGCAAAT-3' in the regulatory regions of its target genes. Involved in the auditory system development, required for terminal differentiation of hair cells in the inner ear. The chain is POU domain, class 4, transcription factor 3 (POU4F3) from Homo sapiens (Human).